We begin with the raw amino-acid sequence, 447 residues long: Tubulin beta chain (447 aa).

GTP-binding residues include Q11, E69, S138, G142, T143, G144, N204, and N226. Mg(2+) is bound at residue E69. The segment at 424–447 is disordered; that stretch reads QYQEASVSEGEEEYDEEAPLEGEE. Acidic residues predominate over residues 432-447; the sequence is EGEEEYDEEAPLEGEE.

It belongs to the tubulin family. As to quaternary structure, dimer of alpha and beta chains. A typical microtubule is a hollow water-filled tube with an outer diameter of 25 nm and an inner diameter of 15 nM. Alpha-beta heterodimers associate head-to-tail to form protofilaments running lengthwise along the microtubule wall with the beta-tubulin subunit facing the microtubule plus end conferring a structural polarity. Microtubules usually have 13 protofilaments but different protofilament numbers can be found in some organisms and specialized cells. Mg(2+) is required as a cofactor.

It localises to the cytoplasm. Its subcellular location is the cytoskeleton. In terms of biological role, tubulin is the major constituent of microtubules, a cylinder consisting of laterally associated linear protofilaments composed of alpha- and beta-tubulin heterodimers. Microtubules grow by the addition of GTP-tubulin dimers to the microtubule end, where a stabilizing cap forms. Below the cap, tubulin dimers are in GDP-bound state, owing to GTPase activity of alpha-tubulin. The chain is Tubulin beta chain from Venturia inaequalis (Apple scab fungus).